A 383-amino-acid chain; its full sequence is E3 ubiquitin-protein ligase SPL2 (383 aa).

Over 1–14 (MSSPERALLNLLTD) the chain is Cytoplasmic. Residues 15-35 (IALSFDGAILGLTLAVSAVGS) traverse the membrane as a helical segment. Topologically, residues 36 to 269 (ALKYASTNAA…MIEDLMEQTN (234 aa)) are chloroplast intermembrane. The chain crosses the membrane as a helical span at residues 270–290 (FIFLGSVILGIVSVGILSYAA). Residues 291–383 (VRTWNKWKQW…IRGSMRVYYS (93 aa)) are Cytoplasmic-facing. Residues 331-370 (CVICVSRRRVPAFIPCGHVVCCRRCASTVERELNPKCPVC) form an RING-type zinc finger.

Its subcellular location is the plastid. The protein resides in the chloroplast outer membrane. It carries out the reaction S-ubiquitinyl-[E2 ubiquitin-conjugating enzyme]-L-cysteine + [acceptor protein]-L-lysine = [E2 ubiquitin-conjugating enzyme]-L-cysteine + N(6)-ubiquitinyl-[acceptor protein]-L-lysine.. The protein operates within protein modification; protein ubiquitination. Its function is as follows. Possesses E3 ubiquitin-protein ligase activity. This Arabidopsis thaliana (Mouse-ear cress) protein is E3 ubiquitin-protein ligase SPL2.